The following is a 105-amino-acid chain: Putative ferredoxin-3 (105 aa).

4Fe-4S ferredoxin-type domains follow at residues 17 to 46 and 70 to 100; these read YLTA…LHGI and TIMV…HVAA. [4Fe-4S] cluster-binding residues include Cys-26, Cys-29, Cys-32, Cys-36, Cys-80, Cys-83, Cys-86, and Cys-90.

The cofactor is [4Fe-4S] cluster.

Its function is as follows. Ferredoxins are iron-sulfur proteins that transfer electrons in a wide variety of metabolic reactions. The chain is Putative ferredoxin-3 (fdxB) from Sinorhizobium fredii (strain NBRC 101917 / NGR234).